The chain runs to 490 residues: MSRYGLQKLYINGAYTDSTSGDTFDAVNPANGECIAQLQAANAQDVDKAVAAAKQGQPVWAAMTAMERSRILRRAVDILRDRNDELAAIETADTGKPLSETRSVDIVTGADVLEYYAGLIPALEGQQIPLRGSAFVYTRREPLGVVAGIGAWNYPLQIALWKSAPALAAGNAMIFKPSEVTSLTALKLAGIYTEAGLPAGVFNVLTGSGDQVGQMLTEHPGIAKVSFTGGIASGKKVMANAAGSTLKDVTMELGGKSPLIIFADADLDKAADIAMMANFYSSGQVCTNGTRVFVPQALQAAFEQKIVERVKRIHIGDPSDERTNFGPLVSFQHRDSVMRYIDSGKREGATLLIGGYSLTEGALAHGAYVAPTVFTHCRDDMQIVREEIFGPVMSILSYQSEEEVIRRANDTEYGLAAGVVTQDLNRAHRVIHQLQAGICWINTWGESAPEMPVGGYKHSGVGRENGISTLEHYTQIKSIQVELGSFNSVF.

Asp-93 contacts K(+). Residue 150 to 152 (GAW) coordinates NAD(+). The active-site Charge relay system is Lys-162. Residue 176 to 179 (KPSE) participates in NAD(+) binding. Val-180 lines the K(+) pocket. Residue 230-233 (GIAS) participates in NAD(+) binding. Leu-246 is a binding site for K(+). Glu-252 serves as the catalytic Proton acceptor. NAD(+) contacts are provided by Gly-254, Cys-286, and Glu-387. Residue Cys-286 is the Nucleophile of the active site. The residue at position 286 (Cys-286) is a Cysteine sulfenic acid (-SOH). K(+) contacts are provided by Lys-457 and Gly-460. The active-site Charge relay system is Glu-464.

The protein belongs to the aldehyde dehydrogenase family. Dimer of dimers. It depends on K(+) as a cofactor.

It carries out the reaction betaine aldehyde + NAD(+) + H2O = glycine betaine + NADH + 2 H(+). The protein operates within amine and polyamine biosynthesis; betaine biosynthesis via choline pathway; betaine from betaine aldehyde: step 1/1. Involved in the biosynthesis of the osmoprotectant glycine betaine. Catalyzes the irreversible oxidation of betaine aldehyde to the corresponding acid. The chain is Betaine aldehyde dehydrogenase from Yersinia pestis.